Reading from the N-terminus, the 648-residue chain is L-aspartate oxidase 2-b, chloroplastic (648 aa).

Residues Ser-98–Ala-101, Lys-120, Ser-127–Gly-134, and Asp-298 contribute to the FAD site. Arg-373 acts as the Proton donor/acceptor in catalysis. FAD-binding positions include Glu-458 and Ser-474–Leu-475.

This sequence belongs to the FAD-dependent oxidoreductase 2 family. NadB subfamily. The cofactor is FAD.

Its subcellular location is the plastid. It localises to the chloroplast. The catalysed reaction is L-aspartate + O2 = iminosuccinate + H2O2. It functions in the pathway alkaloid biosynthesis; nicotine biosynthesis. It participates in cofactor biosynthesis; NAD(+) biosynthesis; iminoaspartate from L-aspartate (oxidase route): step 1/1. Functionally, involved in the biosynthesis of pyridine alkaloid natural products, leading mainly to the production of anabasine, anatabine, nicotine and nornicotine, effective deterrents against herbivores with antiparasitic and pesticide properties (neurotoxins); nornicotine serves as the precursor in the synthesis of the carcinogen compound N'-nitrosonornicotine (NNN). Catalyzes the oxidation of L-aspartate to iminoaspartate. This chain is L-aspartate oxidase 2-b, chloroplastic, found in Nicotiana tabacum (Common tobacco).